Consider the following 107-residue polypeptide: Integration host factor subunit beta (107 aa).

Positions P82–E101 are enriched in basic and acidic residues. The tract at residues P82–L107 is disordered.

This sequence belongs to the bacterial histone-like protein family. As to quaternary structure, heterodimer of an alpha and a beta chain.

In terms of biological role, this protein is one of the two subunits of integration host factor, a specific DNA-binding protein that functions in genetic recombination as well as in transcriptional and translational control. This Paraburkholderia phytofirmans (strain DSM 17436 / LMG 22146 / PsJN) (Burkholderia phytofirmans) protein is Integration host factor subunit beta.